The primary structure comprises 33 residues: Brevinin-2Rk (33 aa).

Cysteine 27 and cysteine 33 are oxidised to a cystine.

As to expression, expressed by the skin glands.

Its subcellular location is the secreted. Its function is as follows. Antimicrobial peptide. This is Brevinin-2Rk from Pelophylax ridibundus (Marsh frog).